The sequence spans 148 residues: Aspartate carbamoyltransferase regulatory chain (148 aa).

Zn(2+)-binding residues include Cys106, Cys111, Cys134, and Cys137.

The protein belongs to the PyrI family. In terms of assembly, contains catalytic and regulatory chains. Requires Zn(2+) as cofactor.

Functionally, involved in allosteric regulation of aspartate carbamoyltransferase. The chain is Aspartate carbamoyltransferase regulatory chain from Methanococcus maripaludis (strain DSM 14266 / JCM 13030 / NBRC 101832 / S2 / LL).